Consider the following 220-residue polypeptide: Probable GTP-binding protein EngB (220 aa).

The 177-residue stretch at 23 to 199 (SVREVAFAGR…ERVLASWLDI (177 aa)) folds into the EngB-type G domain. Mg(2+)-binding residues include serine 38 and threonine 60.

The protein belongs to the TRAFAC class TrmE-Era-EngA-EngB-Septin-like GTPase superfamily. EngB GTPase family. It depends on Mg(2+) as a cofactor.

In terms of biological role, necessary for normal cell division and for the maintenance of normal septation. The sequence is that of Probable GTP-binding protein EngB from Dechloromonas aromatica (strain RCB).